The chain runs to 63 residues: MNNKINNIKITQVKSAIGHKYDQRLTLIGLGLNKMNKSVILENTNSIKGMVNKVKHLLKIENM.

Belongs to the universal ribosomal protein uL30 family. As to quaternary structure, part of the 50S ribosomal subunit.

The chain is Large ribosomal subunit protein uL30 from Rickettsia akari (strain Hartford).